Consider the following 350-residue polypeptide: Protein disulfide isomerase Creld2 (350 aa).

A signal peptide spans 1-22 (MHLLLAAAFGLLLLLPPPGAVA). The short motif at 29–32 (CQRC) is the CXXC element. Disulfide bonds link C29–C32, C138–C152, C146–C164, and C166–C175. The 43-residue stretch at 134–176 (DCQECQGGSERPCSGNGYCSGDGSRQGDGSCQCHTGYKGPLCI) folds into the EGF-like 1 domain. An FU 1 repeat occupies 191–238 (HSICSACDESCKTCSGPSNKDCIQCEVGWARVEDACVDVDECAAETSP). N-linked (GlcNAc...) asparagine glycosylation occurs at N249. The stretch at 251-298 (SYTCEDCDSTCVGCTGKGPANCKECIAGYTKESGQCTDIDECSLEEKA) is one FU 2 repeat. The CXXC signature appears at 261 to 264 (CVGC). Intrachain disulfides connect C261–C264, C292–C306, C299–C315, and C317–C328. The region spanning 288–329 (DIDECSLEEKACKRKNENCYNVPGSFVCVCPEGFEETEDACV) is the EGF-like 2; calcium-binding domain.

This sequence belongs to the CRELD family. Interacts with CHRNA4. Component of a complex containing at least CRELD2, MANF, MATN3 and PDIA4. Expressed in chondrocytes (at protein level).

The protein localises to the endoplasmic reticulum. The enzyme catalyses Catalyzes the rearrangement of -S-S- bonds in proteins.. Its function is as follows. Protein disulfide isomerase. Might play a role in the unfolded protein response. May regulate transport of alpha4-beta2 neuronal acetylcholine receptor. This Mus musculus (Mouse) protein is Protein disulfide isomerase Creld2 (Creld2).